The sequence spans 131 residues: uncharacterized protein (131 aa).

Positions 1–16 are cleaved as a signal peptide; sequence MDVLFVAIFAVPLILG.

The protein localises to the secreted. This is an uncharacterized protein from Homo sapiens (Human).